Consider the following 221-residue polypeptide: MSLSKEEKLQLFKSYNIYGLTAEKFSNGRSNIEVVKAMLESGIKIIQYREKHKSLKEKYEECLQIRELTKQYGALLIVNDHVDLCQMVGADGVHLGQEDYPAKEVRKILGEDFIIGVTTHTKEQVEKAVEDGADYIGLGPVFQSFTKDKPHPPIGLEMVRWAATYCKIPFVAIGGIKEHNLKDVLKAGAKCVSLVTEIVGSDDISQKIKKLWDIIKEFERS.

4-amino-2-methyl-5-(diphosphooxymethyl)pyrimidine-binding positions include 47–51 and Asn-79; that span reads QYREK. Mg(2+) contacts are provided by Asp-80 and Asp-99. Position 118 (Thr-118) interacts with 4-amino-2-methyl-5-(diphosphooxymethyl)pyrimidine. Residue 144–146 coordinates 2-[(2R,5Z)-2-carboxy-4-methylthiazol-5(2H)-ylidene]ethyl phosphate; that stretch reads SFT. Lys-147 contributes to the 4-amino-2-methyl-5-(diphosphooxymethyl)pyrimidine binding site. Residues Gly-175 and 195–196 contribute to the 2-[(2R,5Z)-2-carboxy-4-methylthiazol-5(2H)-ylidene]ethyl phosphate site; that span reads VT.

This sequence belongs to the thiamine-phosphate synthase family. The cofactor is Mg(2+).

The catalysed reaction is 2-[(2R,5Z)-2-carboxy-4-methylthiazol-5(2H)-ylidene]ethyl phosphate + 4-amino-2-methyl-5-(diphosphooxymethyl)pyrimidine + 2 H(+) = thiamine phosphate + CO2 + diphosphate. The enzyme catalyses 2-(2-carboxy-4-methylthiazol-5-yl)ethyl phosphate + 4-amino-2-methyl-5-(diphosphooxymethyl)pyrimidine + 2 H(+) = thiamine phosphate + CO2 + diphosphate. It carries out the reaction 4-methyl-5-(2-phosphooxyethyl)-thiazole + 4-amino-2-methyl-5-(diphosphooxymethyl)pyrimidine + H(+) = thiamine phosphate + diphosphate. It participates in cofactor biosynthesis; thiamine diphosphate biosynthesis; thiamine phosphate from 4-amino-2-methyl-5-diphosphomethylpyrimidine and 4-methyl-5-(2-phosphoethyl)-thiazole: step 1/1. In terms of biological role, condenses 4-methyl-5-(beta-hydroxyethyl)thiazole monophosphate (THZ-P) and 2-methyl-4-amino-5-hydroxymethyl pyrimidine pyrophosphate (HMP-PP) to form thiamine monophosphate (TMP). This Caldicellulosiruptor saccharolyticus (strain ATCC 43494 / DSM 8903 / Tp8T 6331) protein is Thiamine-phosphate synthase.